Reading from the N-terminus, the 370-residue chain is Alpha-ketoglutarate-dependent xanthine dioxygenase xanA (370 aa).

Histidine 107 provides a ligand contact to substrate. Histidine 149 and aspartate 151 together coordinate Fe cation. Positions 195 and 325 each coordinate 2-oxoglutarate. Histidine 340 contributes to the Fe cation binding site. Arginine 352 contributes to the 2-oxoglutarate binding site.

Belongs to the TfdA dioxygenase family. Requires Fe(2+) as cofactor. Glycosylated. Is subject to both N- and O-linked glycosylation. Post-translationally, phosphorylated.

The protein localises to the cytoplasm. The protein resides in the cytosol. It catalyses the reaction xanthine + 2-oxoglutarate + O2 = urate + succinate + CO2. Its activity is regulated as follows. Cu(2+) and Zn(2+) completely inhibit the xanthine dioxygenase activity, whereas Co(2+), Mn(2+), and Ni(2+) partially inhibit the activity. The inactive metal ions are presumed to compete for the Fe(2+)-binding site. N-oxalylglycine (NOG), a known inhibitor of several Fe(2+)/alpha-ketoglutarate-dependent dioxygenase family members, competes with alpha-ketoglutarate and provides a Ki of 0.12 uM for inhibition. 6,8-dihydroxypurine acts as a slow-binding competitive inhibitor. The thiol-specific inhibitors 5,5'-dithiobis(2-nitrobenzoic acid) (DTNB) and iodoacetamide, inhibit also the catalytic activity. Functionally, alpha-ketoglutarate-dependent xanthine dioxygenase is a non-heme mononuclear Fe(2+) enzyme that decarboxylates alpha-ketoglutarate to succinate and CO(2) while hydroxylating xanthine to generate uric acid. Allows xanthine utilization as a nitrogen source. Whereas xanA is highly specific for xanthine, alpha-ketoadipic acid can replace alpha-ketoglutarate as a cosubstrate. Exhibits ferroxidase activity in the absence of substrates. This chain is Alpha-ketoglutarate-dependent xanthine dioxygenase xanA, found in Emericella nidulans (Aspergillus nidulans).